The primary structure comprises 425 residues: Dihydroorotase (425 aa).

Zn(2+)-binding residues include histidine 61 and histidine 63. Residues 63–65 and asparagine 95 each bind substrate; that span reads HLR. 3 residues coordinate Zn(2+): aspartate 153, histidine 180, and histidine 233. Asparagine 279 lines the substrate pocket. Aspartate 306 contributes to the Zn(2+) binding site. Aspartate 306 is a catalytic residue. Residue histidine 310 participates in substrate binding.

It belongs to the metallo-dependent hydrolases superfamily. DHOase family. Class I DHOase subfamily. The cofactor is Zn(2+).

The enzyme catalyses (S)-dihydroorotate + H2O = N-carbamoyl-L-aspartate + H(+). The protein operates within pyrimidine metabolism; UMP biosynthesis via de novo pathway; (S)-dihydroorotate from bicarbonate: step 3/3. Its function is as follows. Catalyzes the reversible cyclization of carbamoyl aspartate to dihydroorotate. The protein is Dihydroorotase of Geobacter sulfurreducens (strain ATCC 51573 / DSM 12127 / PCA).